A 119-amino-acid chain; its full sequence is MSQVDKAARRQKIKDRSRVSVQGTASKPRLCIYRSLAEMYAQLIDDVNGKTLVTASTMTKNNKAFEGTKSDASRIVGQQIAEKALAAGITNVVFDRNGFRYHGRVKALADGAREAGLIF.

The disordered stretch occupies residues 1–23 (MSQVDKAARRQKIKDRSRVSVQG).

It belongs to the universal ribosomal protein uL18 family. Part of the 50S ribosomal subunit; part of the 5S rRNA/L5/L18/L25 subcomplex. Contacts the 5S and 23S rRNAs.

Its function is as follows. This is one of the proteins that bind and probably mediate the attachment of the 5S RNA into the large ribosomal subunit, where it forms part of the central protuberance. This is Large ribosomal subunit protein uL18 from Chlorobium chlorochromatii (strain CaD3).